The primary structure comprises 295 residues: Aquaporin-9 (295 aa).

Residues 1 to 24 are Cytoplasmic-facing; it reads MPSEKDRAKKNLVQRLALKSCLAK. A helical membrane pass occupies residues 25-43; the sequence is ETLSEFLGTFIMIVLGCGS. Over 44-57 the chain is Extracellular; sequence IAQAVLSREKAGGI. Residues 58–77 form a helical membrane-spanning segment; it reads ITINIGFATAVVMALYATFG. The Cytoplasmic portion of the chain corresponds to 78-79; that stretch reads VS. Positions 80–92 form an intramembrane region, discontinuously helical; that stretch reads GGHINPAVSFAMC. The NPA 1 signature appears at 84–86; that stretch reads NPA. Topologically, residues 93–98 are cytoplasmic; the sequence is TFGRME. A helical membrane pass occupies residues 99 to 123; that stretch reads WFKFPFYVGAQLLGAFVGAATVFGI. The Extracellular portion of the chain corresponds to 124-160; the sequence is YYDGLMAFADGKLLITGENGTAFIFATYPKPFVSVPG. Residues 161 to 178 traverse the membrane as a helical segment; the sequence is AFVDQVVSTMFLLLIVFA. Over 179–190 the chain is Cytoplasmic; the sequence is IFDSRNLGVPRG. Residues 191-207 form a helical membrane-spanning segment; sequence LEPIVIGLLIIVISCSL. Over 208 to 210 the chain is Extracellular; it reads GLN. The discontinuously helical intramembrane region spans 211–225; sequence SGCAMNPARDLSPRL. The short motif at 216–218 is the NPA 2 element; sequence NPA. The Extracellular segment spans residues 226–243; the sequence is FTALAGWGFEVFTFGNNF. The chain crosses the membrane as a helical span at residues 244–264; it reads WWIPVVGPMIGAVLGGLIYVL. Over 265–295 the chain is Cytoplasmic; the sequence is FIQMHHSNPDPEVKAEPAENNLEKHELSVIM.

The protein belongs to the MIP/aquaporin (TC 1.A.8) family. In terms of assembly, homotetramer; each monomer provides an independent glycerol/water pore.

The protein resides in the cell membrane. It localises to the basolateral cell membrane. The catalysed reaction is glycerol(in) = glycerol(out). The enzyme catalyses H2O(in) = H2O(out). It catalyses the reaction urea(in) = urea(out). It carries out the reaction (S)-lactate(in) = (S)-lactate(out). The catalysed reaction is NH4(+)(in) = NH4(+)(out). The enzyme catalyses uracil(in) = uracil(out). It catalyses the reaction adenine(out) = adenine(in). It carries out the reaction 3-hydroxybutanoate(in) = 3-hydroxybutanoate(out). The catalysed reaction is D-sorbitol(in) = D-sorbitol(out). The enzyme catalyses D-mannitol(in) = D-mannitol(out). It catalyses the reaction H2O2(out) = H2O2(in). It carries out the reaction arsenite(in) = arsenite(out). The catalysed reaction is selenite(in) = selenite(out). Aquaglyceroporins form homotetrameric transmembrane channels, with each monomer independently mediating glycerol and water transport across the plasma membrane along their osmotic gradient. AQP9 is the primary route for glycerol uptake in hepatocytes, supporting hepatic gluconeogenesis. It exhibits broad specificity and may transport various small, non-charged solutes, including carbamides, polyols, purines, and pyrimidines. AQP9 may also facilitate hepatic urea extrusion. Due to its permeability to lactate, AQP9 might participate in the astrocyte-to-neuron lactate shuttle, supplying neurons with energy. Additionally, AQP9 is permeable to arsenite, contributing to arsenic excretion by the liver and providing partial protection against arsenic toxicity. It is also permeable to H2O2 in vivo. Could also be permeable to ammonium. This chain is Aquaporin-9, found in Mus musculus (Mouse).